The sequence spans 207 residues: Large ribosomal subunit protein uL4 (207 aa).

Residues 49–78 form a disordered region; the sequence is HAVKNRSAVRGGGKKPWRQKGTGRARQGSI. Basic residues predominate over residues 60 to 71; that stretch reads GGKKPWRQKGTG.

It belongs to the universal ribosomal protein uL4 family. As to quaternary structure, part of the 50S ribosomal subunit.

Its function is as follows. One of the primary rRNA binding proteins, this protein initially binds near the 5'-end of the 23S rRNA. It is important during the early stages of 50S assembly. It makes multiple contacts with different domains of the 23S rRNA in the assembled 50S subunit and ribosome. In terms of biological role, forms part of the polypeptide exit tunnel. The protein is Large ribosomal subunit protein uL4 of Ligilactobacillus salivarius (strain UCC118) (Lactobacillus salivarius).